The sequence spans 459 residues: uncharacterized protein (459 aa).

In terms of domain architecture, TRAM spans 7-65; it reads PVNKNEIYTLTFEDLTHEGNGVAKIEGYPLFVPEVLPDEQAKVKVVKVNKNFGFGKLLE. 4 residues coordinate [4Fe-4S] cluster: cysteine 78, cysteine 82, cysteine 85, and cysteine 164. The S-adenosyl-L-methionine site is built by glutamine 288, tyrosine 317, glutamate 338, and aspartate 386. The active-site Nucleophile is the cysteine 413.

It belongs to the class I-like SAM-binding methyltransferase superfamily. RNA M5U methyltransferase family.

This is an uncharacterized protein from Oceanobacillus iheyensis (strain DSM 14371 / CIP 107618 / JCM 11309 / KCTC 3954 / HTE831).